Consider the following 293-residue polypeptide: Vibriobactin-specific isochorismatase (293 aa).

The Carrier domain occupies 211 to 287 (KLTGLSLRTM…QWWQTIQANL (77 aa)). Ser-248 carries the post-translational modification O-(pantetheine 4'-phosphoryl)serine.

It belongs to the isochorismatase family. Pantetheine 4'-phosphate is required as a cofactor.

It catalyses the reaction isochorismate + H2O = (2S,3S)-2,3-dihydroxy-2,3-dihydrobenzoate + pyruvate. The protein operates within siderophore biosynthesis; vibriobactin biosynthesis. Involved in the biosynthesis of the catechol siderophore vibriobactin. Vibriobactin is a chelating compound involved in transporting iron from the bacterial environment into the cell cytoplasm. This Vibrio cholerae serotype O1 (strain ATCC 39541 / Classical Ogawa 395 / O395) protein is Vibriobactin-specific isochorismatase (vibB).